We begin with the raw amino-acid sequence, 192 residues long: Ion-translocating oxidoreductase complex subunit B (192 aa).

Residues M1–S26 form a hydrophobic region. Residues E32–V91 form the 4Fe-4S domain. Residues C49, C52, C57, C74, C117, C120, C123, C127, C147, C150, C153, and C157 each coordinate [4Fe-4S] cluster. 4Fe-4S ferredoxin-type domains follow at residues Q108–K137 and A138–I167.

Belongs to the 4Fe4S bacterial-type ferredoxin family. RnfB subfamily. In terms of assembly, the complex is composed of six subunits: RnfA, RnfB, RnfC, RnfD, RnfE and RnfG. It depends on [4Fe-4S] cluster as a cofactor.

The protein localises to the cell inner membrane. Functionally, part of a membrane-bound complex that couples electron transfer with translocation of ions across the membrane. The sequence is that of Ion-translocating oxidoreductase complex subunit B from Pectobacterium carotovorum subsp. carotovorum (strain PC1).